The sequence spans 302 residues: Stanniocalcin-2 (302 aa).

An N-terminal signal peptide occupies residues 1 to 24 (MCAERLGHFMTLALVLATIDPARG). Residues 23 to 44 (RGTDATNPPEGPQDRSSQQKGR) form a disordered region. N-linked (GlcNAc...) asparagine glycosylation occurs at N73. Residues 218–302 (PPTAPPERQP…EQSEYSDIRR (85 aa)) are disordered. Residues 227–264 (PQVDRAKLSRAHHGEAGHHLPEPSSRETGRGAKGERGS) show a composition bias toward basic and acidic residues. Phosphoserine occurs at positions 250 and 251. At T254 the chain carries Phosphothreonine.

This sequence belongs to the stanniocalcin family. As to quaternary structure, homodimer; disulfide-linked.

It localises to the secreted. Functionally, has an anti-hypocalcemic action on calcium and phosphate homeostasis. This Macaca nemestrina (Pig-tailed macaque) protein is Stanniocalcin-2 (STC2).